A 159-amino-acid polypeptide reads, in one-letter code: Na(+)/H(+) antiporter subunit E1 (159 aa).

A run of 4 helical transmembrane segments spans residues 1-21 (MAIQFVINLLVSVIWLLVTNS), 27-47 (FVLGFILGLFLVYLLHRVLPG), 60-80 (LIITFLTELIKANFGVLKIIL), and 101-121 (WQLVLLSNLITLTPGTVVLGI).

The protein belongs to the CPA3 antiporters (TC 2.A.63) subunit E family. In terms of assembly, may form a heterooligomeric complex that consists of seven subunits: mnhA1, mnhB1, mnhC1, mnhD1, mnhE1, mnhF1 and mnhG1.

It is found in the cell membrane. Mnh complex is a Na(+)/H(+) antiporter involved in Na(+) excretion. In Staphylococcus epidermidis (strain ATCC 35984 / DSM 28319 / BCRC 17069 / CCUG 31568 / BM 3577 / RP62A), this protein is Na(+)/H(+) antiporter subunit E1 (mnhE1).